The following is a 726-amino-acid chain: ORC ubiquitin ligase 1 (726 aa).

An RING-type; degenerate zinc finger spans residues 18-56; the sequence is CHICLGKVRQPVICINNHVFCSICIDLWLKNNSQCPACR. Coiled-coil stretches lie at residues 87–129 and 155–270; these read LRKT…TILD and ETVA…MNSI. Ser210 is subject to Phosphoserine. Residues 274-335 are disordered; the sequence is ALPADGKGSK…ARQESTSKAE (62 aa). Positions 280-290 are enriched in basic and acidic residues; it reads KGSKGSEEDVA. The segment covering 300–320 has biased composition (low complexity); that stretch reads KQPSSSTSSSSHLAKPSSSRL. Positions 321–334 are enriched in polar residues; it reads CDTSSARQESTSKA. Residues Ser526, Ser553, Ser561, Ser568, Ser570, Ser719, and Ser721 each carry the phosphoserine modification. The disordered stretch occupies residues 687–726; that stretch reads QSPWSTSFVPEKRNKNVNQSTKRKIQSSLSNASPSKATKS. The segment covering 702 to 726 has biased composition (polar residues); it reads NVNQSTKRKIQSSLSNASPSKATKS.

Associates with ORC complex. Binds to chromatin; association is cell cycle-regulated, absent from mitotic chromosomes, is associated with chromatin from G1 and partially released from chromatin from mid S-phase. In terms of processing, auto-ubiquitinated.

It is found in the chromosome. It carries out the reaction S-ubiquitinyl-[E2 ubiquitin-conjugating enzyme]-L-cysteine + [acceptor protein]-L-lysine = [E2 ubiquitin-conjugating enzyme]-L-cysteine + N(6)-ubiquitinyl-[acceptor protein]-L-lysine.. Its function is as follows. E3 ubiquitin ligase essential for DNA replication origin activation during S phase. Acts as a replication origin selector which selects the origins to be fired and catalyzes the multi-mono-ubiquitination of a subset of chromatin-bound ORC3 and ORC5 during S-phase. In Pongo abelii (Sumatran orangutan), this protein is ORC ubiquitin ligase 1 (OBI1).